Consider the following 190-residue polypeptide: Potassium-transporting ATPase KdpC subunit (190 aa).

Residues 13 to 33 (IGFLLLTLVCGVLYPGVVTVF) form a helical membrane-spanning segment.

It belongs to the KdpC family. The system is composed of three essential subunits: KdpA, KdpB and KdpC.

It is found in the cell membrane. Part of the high-affinity ATP-driven potassium transport (or Kdp) system, which catalyzes the hydrolysis of ATP coupled with the electrogenic transport of potassium into the cytoplasm. This subunit acts as a catalytic chaperone that increases the ATP-binding affinity of the ATP-hydrolyzing subunit KdpB by the formation of a transient KdpB/KdpC/ATP ternary complex. In Listeria monocytogenes serovar 1/2a (strain ATCC BAA-679 / EGD-e), this protein is Potassium-transporting ATPase KdpC subunit.